We begin with the raw amino-acid sequence, 296 residues long: Formamidopyrimidine-DNA glycosylase (296 aa).

The active-site Schiff-base intermediate with DNA is the proline 2. Glutamate 3 (proton donor) is an active-site residue. Lysine 61 (proton donor; for beta-elimination activity) is an active-site residue. Residues histidine 104, arginine 123, and lysine 169 each contribute to the DNA site. The FPG-type zinc finger occupies 255–289 (DAYGREGEPCRRCGAIMRREKFMNRSSFYCPRCQP). The Proton donor; for delta-elimination activity role is filled by arginine 279.

The protein belongs to the FPG family. As to quaternary structure, monomer. It depends on Zn(2+) as a cofactor.

The enzyme catalyses Hydrolysis of DNA containing ring-opened 7-methylguanine residues, releasing 2,6-diamino-4-hydroxy-5-(N-methyl)formamidopyrimidine.. The catalysed reaction is 2'-deoxyribonucleotide-(2'-deoxyribose 5'-phosphate)-2'-deoxyribonucleotide-DNA = a 3'-end 2'-deoxyribonucleotide-(2,3-dehydro-2,3-deoxyribose 5'-phosphate)-DNA + a 5'-end 5'-phospho-2'-deoxyribonucleoside-DNA + H(+). Its function is as follows. Involved in base excision repair of DNA damaged by oxidation or by mutagenic agents. Acts as a DNA glycosylase that recognizes and removes damaged bases. Has a preference for oxidized purines, such as 7,8-dihydro-8-oxoguanine (8-oxoG). Has AP (apurinic/apyrimidinic) lyase activity and introduces nicks in the DNA strand. Cleaves the DNA backbone by beta-delta elimination to generate a single-strand break at the site of the removed base with both 3'- and 5'-phosphates. The chain is Formamidopyrimidine-DNA glycosylase from Mycobacterium sp. (strain JLS).